Here is a 417-residue protein sequence, read N- to C-terminus: MSLSKKLTLDKLDVRGKRVIMRVDFNVPMKKNQITNNQRIKASIPSIKYCLDNGAKAVVLMSHLGRPDGVPMPDKYSLAPVAVELKSLLGKDVLFLKDCVGAEVEKACANPAPGSVILLENLRFHVEEEGKGQDPSGKKIKAEPDKIEAFRASLSKLGDVYVNDAFGTAHRAHSSMVGVNLPHKASGFLMKKELDYFAKALENPVRPFLAILGGAKVADKIQLIKNMLDKVNEMIIGGGMAYTFLKVLNNMEIGASLFDEEGAKIVKDIMAKAQKNGVRITFPVDFVTGDKFDENAQVGKATVASGISPGWMGLDCGPESNKNHAQVVAQARLIVWNGPLGVFEWDAFAKGTKALMDEIVKATSKGCITVIGGGDTATCCAKWNTEDKVSHVSTGGGASLELLEGKILPGVEALSNM.

S2 is modified (N-acetylserine). 2 positions are modified to phosphoserine: S2 and S4. An N6-acetyllysine modification is found at K11. 6 residues coordinate (2R)-3-phosphoglycerate: V23, D24, F25, N26, Q38, and R39. An N6-acetyllysine modification is found at K48. 4 residues coordinate (2R)-3-phosphoglycerate: S62, H63, G65, and R66. 3 positions are modified to N6-acetyllysine: K75, K86, and K97. (2R)-3-phosphoglycerate-binding residues include L122 and R123. K131 and K146 each carry N6-acetyllysine. (2R)-3-phosphoglycerate is bound by residues H170 and R171. Position 196 is a phosphotyrosine (Y196). Residue K199 is modified to N6-acetyllysine. G214 is an ADP binding site. G214 lines the CDP pocket. AMP-binding residues include A215 and K216. ATP is bound at residue A215. A215 serves as a coordination point for Mg(2+). The Mg(2+) site is built by A218 and D219. D219 is a CDP binding site. K220 contacts AMP. ATP is bound at residue K220. G238 contributes to the ADP binding site. G238 lines the CDP pocket. Residue G239 participates in AMP binding. G239 contributes to the ATP binding site. An N6-acetyllysine mark is found at K267 and K291. G313 lines the AMP pocket. G313 is a binding site for ATP. CDP contacts are provided by G338 and F343. F343 is an ADP binding site. E344 contributes to the AMP binding site. ATP-binding residues include E344, D375, and T376. Mg(2+) is bound at residue D375.

Belongs to the phosphoglycerate kinase family. As to quaternary structure, monomer. Requires Mg(2+) as cofactor. In terms of tissue distribution, mainly found in round spermatids. Localized on the principle piece in the sperm (at protein level). Testis-specific. Expression significantly decreased in the testis of elderly men.

The protein resides in the cytoplasm. It carries out the reaction (2R)-3-phosphoglycerate + ATP = (2R)-3-phospho-glyceroyl phosphate + ADP. It participates in carbohydrate degradation; glycolysis; pyruvate from D-glyceraldehyde 3-phosphate: step 2/5. Essential for sperm motility and male fertility. Not required for the completion of spermatogenesis. The protein is Phosphoglycerate kinase 2 (PGK2) of Homo sapiens (Human).